Reading from the N-terminus, the 100-residue chain is MVSESSQIVVEIIYAYPDQYFLKKISLDQPTTIQNVILQSGILAKYTEIDLRINKVGIFSRPAKLTDYVAHGDRIEIYRPLVADPKEIRRKRAAEQAQKA.

Belongs to the UPF0125 (RnfH) family.

The protein is UPF0125 protein HD_1828 of Haemophilus ducreyi (strain 35000HP / ATCC 700724).